The sequence spans 443 residues: Ribosomal protein uS12 methylthiotransferase RimO (443 aa).

Residues 8-118 (PKVGFVSLGC…VVNAVHEVVP (111 aa)) enclose the MTTase N-terminal domain. [4Fe-4S] cluster is bound by residues Cys-17, Cys-53, Cys-82, Cys-151, Cys-155, and Cys-158. Positions 137–376 (LTPRHYAYLK…AHQQAISSAR (240 aa)) constitute a Radical SAM core domain. Residues 378–443 (QLRIGKEIEV…DEYDMWAEPV (66 aa)) form the TRAM domain.

It belongs to the methylthiotransferase family. RimO subfamily. [4Fe-4S] cluster serves as cofactor.

The protein localises to the cytoplasm. It catalyses the reaction L-aspartate(89)-[ribosomal protein uS12]-hydrogen + (sulfur carrier)-SH + AH2 + 2 S-adenosyl-L-methionine = 3-methylsulfanyl-L-aspartate(89)-[ribosomal protein uS12]-hydrogen + (sulfur carrier)-H + 5'-deoxyadenosine + L-methionine + A + S-adenosyl-L-homocysteine + 2 H(+). Catalyzes the methylthiolation of an aspartic acid residue of ribosomal protein uS12. This Pseudomonas putida (strain W619) protein is Ribosomal protein uS12 methylthiotransferase RimO.